The following is a 208-amino-acid chain: Large ribosomal subunit protein uL4 (208 aa).

Positions 45–84 are disordered; that stretch reads RQGTHKVKNRSEVRGGGKKPYRQKGTGHARQGSSRSGLMS. A compositionally biased stretch (basic residues) spans 60–71; that stretch reads GGKKPYRQKGTG.

Belongs to the universal ribosomal protein uL4 family. As to quaternary structure, part of the 50S ribosomal subunit.

One of the primary rRNA binding proteins, this protein initially binds near the 5'-end of the 23S rRNA. It is important during the early stages of 50S assembly. It makes multiple contacts with different domains of the 23S rRNA in the assembled 50S subunit and ribosome. Its function is as follows. Forms part of the polypeptide exit tunnel. In Prosthecochloris aestuarii (strain DSM 271 / SK 413), this protein is Large ribosomal subunit protein uL4.